A 110-amino-acid chain; its full sequence is DNA-binding protein Pars_1791 (110 aa).

It belongs to the PDCD5 family.

The chain is DNA-binding protein Pars_1791 from Pyrobaculum arsenaticum (strain DSM 13514 / JCM 11321 / PZ6).